Reading from the N-terminus, the 293-residue chain is Phosphatidylserine decarboxylase proenzyme (293 aa).

Active-site charge relay system; for autoendoproteolytic cleavage activity residues include aspartate 90, histidine 147, and serine 254. The active-site Schiff-base intermediate with substrate; via pyruvic acid; for decarboxylase activity is serine 254. Residue serine 254 is modified to Pyruvic acid (Ser); by autocatalysis.

This sequence belongs to the phosphatidylserine decarboxylase family. PSD-B subfamily. Prokaryotic type I sub-subfamily. As to quaternary structure, heterodimer of a large membrane-associated beta subunit and a small pyruvoyl-containing alpha subunit. Requires pyruvate as cofactor. Is synthesized initially as an inactive proenzyme. Formation of the active enzyme involves a self-maturation process in which the active site pyruvoyl group is generated from an internal serine residue via an autocatalytic post-translational modification. Two non-identical subunits are generated from the proenzyme in this reaction, and the pyruvate is formed at the N-terminus of the alpha chain, which is derived from the carboxyl end of the proenzyme. The autoendoproteolytic cleavage occurs by a canonical serine protease mechanism, in which the side chain hydroxyl group of the serine supplies its oxygen atom to form the C-terminus of the beta chain, while the remainder of the serine residue undergoes an oxidative deamination to produce ammonia and the pyruvoyl prosthetic group on the alpha chain. During this reaction, the Ser that is part of the protease active site of the proenzyme becomes the pyruvoyl prosthetic group, which constitutes an essential element of the active site of the mature decarboxylase.

Its subcellular location is the cell membrane. The catalysed reaction is a 1,2-diacyl-sn-glycero-3-phospho-L-serine + H(+) = a 1,2-diacyl-sn-glycero-3-phosphoethanolamine + CO2. It functions in the pathway phospholipid metabolism; phosphatidylethanolamine biosynthesis; phosphatidylethanolamine from CDP-diacylglycerol: step 2/2. Catalyzes the formation of phosphatidylethanolamine (PtdEtn) from phosphatidylserine (PtdSer). In Yersinia enterocolitica serotype O:8 / biotype 1B (strain NCTC 13174 / 8081), this protein is Phosphatidylserine decarboxylase proenzyme.